A 361-amino-acid polypeptide reads, in one-letter code: Phenylalanine--tRNA ligase alpha subunit (361 aa).

Residue Glu-260 coordinates Mg(2+).

It belongs to the class-II aminoacyl-tRNA synthetase family. Phe-tRNA synthetase alpha subunit type 1 subfamily. Tetramer of two alpha and two beta subunits. The cofactor is Mg(2+).

It is found in the cytoplasm. It carries out the reaction tRNA(Phe) + L-phenylalanine + ATP = L-phenylalanyl-tRNA(Phe) + AMP + diphosphate + H(+). The protein is Phenylalanine--tRNA ligase alpha subunit of Bartonella henselae (strain ATCC 49882 / DSM 28221 / CCUG 30454 / Houston 1) (Rochalimaea henselae).